A 1584-amino-acid chain; its full sequence is Pentafunctional AROM polypeptide (1584 aa).

Residues 1–384 are 3-dehydroquinate synthase; the sequence is MSQDTDVVSV…YEKHATVVSD (384 aa). NAD(+) contacts are provided by residues 46–48, 83–86, 114–116, and aspartate 119; these read DTN, ETSK, and GGV. Arginine 130 provides a ligand contact to 7-phospho-2-dehydro-3-deoxy-D-arabino-heptonate. 139–140 contributes to the NAD(+) binding site; that stretch reads TT. 7-phospho-2-dehydro-3-deoxy-D-arabino-heptonate-binding residues include aspartate 146 and lysine 152. Lysine 161 is an NAD(+) binding site. Asparagine 162 contacts 7-phospho-2-dehydro-3-deoxy-D-arabino-heptonate. NAD(+) contacts are provided by residues 179–182 and asparagine 190; that span reads FLET. Residue glutamate 194 participates in Zn(2+) binding. Residues 194-197 and lysine 250 each bind 7-phospho-2-dehydro-3-deoxy-D-arabino-heptonate; that span reads EVIK. Catalysis depends on glutamate 260, which acts as the Proton acceptor; for 3-dehydroquinate synthase activity. Residues 264–268 and histidine 271 contribute to the 7-phospho-2-dehydro-3-deoxy-D-arabino-heptonate site; that span reads RNLLN. Residue histidine 271 coordinates Zn(2+). The active-site Proton acceptor; for 3-dehydroquinate synthase activity is histidine 275. Histidine 287 and lysine 356 together coordinate 7-phospho-2-dehydro-3-deoxy-D-arabino-heptonate. Histidine 287 is a binding site for Zn(2+). Positions 397–843 are EPSP synthase; that stretch reads VSPFDNSVSD…WDVLRNSFKI (447 aa). Catalysis depends on cysteine 825, which acts as the For EPSP synthase activity. The shikimate kinase stretch occupies residues 863-1058; sequence RASVILIGMR…IQKPHSFFLS (196 aa). An ATP-binding site is contributed by 870 to 877; that stretch reads GMRGAGKT. The interval 1059–1280 is 3-dehydroquinase; it reads LTFPNINDAI…AAPGQLSVRQ (222 aa). The Proton acceptor; for 3-dehydroquinate dehydratase activity role is filled by histidine 1182. Lysine 1211 acts as the Schiff-base intermediate with substrate; for 3-dehydroquinate dehydratase activity in catalysis. The shikimate dehydrogenase stretch occupies residues 1293–1584; sequence PKKFYLFGTP…YMVLCAKEHN (292 aa).

The protein in the N-terminal section; belongs to the sugar phosphate cyclases superfamily. Dehydroquinate synthase family. It in the 2nd section; belongs to the EPSP synthase family. In the 3rd section; belongs to the shikimate kinase family. This sequence in the 4th section; belongs to the type-I 3-dehydroquinase family. The protein in the C-terminal section; belongs to the shikimate dehydrogenase family. In terms of assembly, homodimer. Zn(2+) serves as cofactor.

It localises to the cytoplasm. It catalyses the reaction 7-phospho-2-dehydro-3-deoxy-D-arabino-heptonate = 3-dehydroquinate + phosphate. The enzyme catalyses 3-dehydroquinate = 3-dehydroshikimate + H2O. It carries out the reaction shikimate + NADP(+) = 3-dehydroshikimate + NADPH + H(+). The catalysed reaction is shikimate + ATP = 3-phosphoshikimate + ADP + H(+). It catalyses the reaction 3-phosphoshikimate + phosphoenolpyruvate = 5-O-(1-carboxyvinyl)-3-phosphoshikimate + phosphate. It functions in the pathway metabolic intermediate biosynthesis; chorismate biosynthesis; chorismate from D-erythrose 4-phosphate and phosphoenolpyruvate: step 2/7. Its pathway is metabolic intermediate biosynthesis; chorismate biosynthesis; chorismate from D-erythrose 4-phosphate and phosphoenolpyruvate: step 3/7. The protein operates within metabolic intermediate biosynthesis; chorismate biosynthesis; chorismate from D-erythrose 4-phosphate and phosphoenolpyruvate: step 4/7. It participates in metabolic intermediate biosynthesis; chorismate biosynthesis; chorismate from D-erythrose 4-phosphate and phosphoenolpyruvate: step 5/7. It functions in the pathway metabolic intermediate biosynthesis; chorismate biosynthesis; chorismate from D-erythrose 4-phosphate and phosphoenolpyruvate: step 6/7. The AROM polypeptide catalyzes 5 consecutive enzymatic reactions in prechorismate polyaromatic amino acid biosynthesis. The chain is Pentafunctional AROM polypeptide from Schizosaccharomyces japonicus (strain yFS275 / FY16936) (Fission yeast).